The following is a 364-amino-acid chain: Dihydroorotate dehydrogenase (quinone) (364 aa).

Residues 78–82 (AGFDK) and threonine 102 contribute to the FMN site. Residue lysine 82 coordinates substrate. A substrate-binding site is contributed by 127–131 (NRMGF). Residues asparagine 156 and asparagine 189 each contribute to the FMN site. A substrate-binding site is contributed by asparagine 189. Residue serine 192 is the Nucleophile of the active site. Asparagine 194 lines the substrate pocket. Positions 227 and 255 each coordinate FMN. Position 256 to 257 (256 to 257 (NT)) interacts with substrate. FMN is bound by residues glycine 285, glycine 314, and 335–336 (YT).

It belongs to the dihydroorotate dehydrogenase family. Type 2 subfamily. Monomer. It depends on FMN as a cofactor.

It localises to the cell membrane. It catalyses the reaction (S)-dihydroorotate + a quinone = orotate + a quinol. It functions in the pathway pyrimidine metabolism; UMP biosynthesis via de novo pathway; orotate from (S)-dihydroorotate (quinone route): step 1/1. In terms of biological role, catalyzes the conversion of dihydroorotate to orotate with quinone as electron acceptor. The sequence is that of Dihydroorotate dehydrogenase (quinone) from Thermosynechococcus vestitus (strain NIES-2133 / IAM M-273 / BP-1).